Reading from the N-terminus, the 302-residue chain is Acetylglutamate kinase (302 aa).

Substrate-binding positions include 67–68, Arg-89, and Asn-189; that span reads GG.

It belongs to the acetylglutamate kinase family. ArgB subfamily.

It localises to the cytoplasm. The catalysed reaction is N-acetyl-L-glutamate + ATP = N-acetyl-L-glutamyl 5-phosphate + ADP. It participates in amino-acid biosynthesis; L-arginine biosynthesis; N(2)-acetyl-L-ornithine from L-glutamate: step 2/4. Functionally, catalyzes the ATP-dependent phosphorylation of N-acetyl-L-glutamate. In Streptomyces clavuligerus, this protein is Acetylglutamate kinase.